A 288-amino-acid chain; its full sequence is Syntaxin PEP12 (288 aa).

Residues 1–268 lie on the Cytoplasmic side of the membrane; it reads MSEDEFFGGD…RYQKRTSRWR (268 aa). A phosphoserine mark is found at Ser2 and Ser23. Residues 195 to 257 form the t-SNARE coiled-coil homology domain; it reads QNLIEQRDQE…QLASDELRKA (63 aa). A helical; Anchor for type IV membrane protein transmembrane segment spans residues 269–288; the sequence is VYLLIVLLVMLLFIFLIMKL.

Belongs to the syntaxin family. Ubiquitinated.

Its subcellular location is the membrane. In terms of biological role, plays a role in the sorting and targeting of vacuolar proteases. The polypeptide is Syntaxin PEP12 (PEP12) (Saccharomyces cerevisiae (strain ATCC 204508 / S288c) (Baker's yeast)).